Consider the following 141-residue polypeptide: Hemoglobin subunit alpha-D (141 aa).

Residues 1–141 (MLSADEKQLI…VSDVLAEKYR (141 aa)) enclose the Globin domain. Heme b contacts are provided by histidine 58 and histidine 87.

Belongs to the globin family. In terms of assembly, heterotetramer of two alpha-D chains and two beta chains. Red blood cells.

Functionally, involved in oxygen transport from the lung to the various peripheral tissues. The protein is Hemoglobin subunit alpha-D (HBAD) of Phrynops hilarii (Snake-necked turtle).